Consider the following 213-residue polypeptide: N-(5'-phosphoribosyl)anthranilate isomerase (213 aa).

It belongs to the TrpF family.

The catalysed reaction is N-(5-phospho-beta-D-ribosyl)anthranilate = 1-(2-carboxyphenylamino)-1-deoxy-D-ribulose 5-phosphate. Its pathway is amino-acid biosynthesis; L-tryptophan biosynthesis; L-tryptophan from chorismate: step 3/5. In Methanocella arvoryzae (strain DSM 22066 / NBRC 105507 / MRE50), this protein is N-(5'-phosphoribosyl)anthranilate isomerase.